The primary structure comprises 231 residues: 2-C-methyl-D-erythritol 2,4-cyclodiphosphate synthase, chloroplastic (231 aa).

The N-terminal 52 residues, 1–52, are a transit peptide targeting the chloroplast; sequence MATSSTQLLLSSSSLFHSQITKKPFLLPATKIGVWRPKKSLSLSCRPSASVS. A divalent metal cation contacts are provided by Asp82 and His84. Residues 82 to 84, 108 to 109, 112 to 120, 130 to 132, 135 to 139, Asp139, 174 to 180, and 205 to 209 each bind substrate; these read DLH, HS, DVLLHCVVD, DIG, FPDSD, LQRPKIS, and AKTHE. His116 provides a ligand contact to a divalent metal cation.

It belongs to the IspF family. In terms of assembly, homotrimer. A divalent metal cation serves as cofactor.

It is found in the plastid. The protein resides in the chloroplast stroma. It catalyses the reaction 4-CDP-2-C-methyl-D-erythritol 2-phosphate = 2-C-methyl-D-erythritol 2,4-cyclic diphosphate + CMP. It participates in isoprenoid biosynthesis; isopentenyl diphosphate biosynthesis via DXP pathway; isopentenyl diphosphate from 1-deoxy-D-xylulose 5-phosphate: step 4/6. Enzyme of the plastid non-mevalonate pathway for isoprenoid biosynthesis that converts 4-diphosphocytidyl-2C-methyl-D-erythritol 2-phosphate into 2C-methyl-D-erythritol 2,4-cyclodiphosphate and CMP. Is essential for chloroplast development. The protein is 2-C-methyl-D-erythritol 2,4-cyclodiphosphate synthase, chloroplastic of Arabidopsis thaliana (Mouse-ear cress).